Reading from the N-terminus, the 389-residue chain is MEKAIRNFLSQESAGGILLLVAVVFAMLMANSPLSGLYQGFLGTDVQVRVGALDIHKPLLLWINDGLMALFFLLIGLEVKRELLEGALSSVAQASLPSFAAIGGMLVPAGIYLLFNYGDPVTQAGWAIPAATDIAFALGIMALLGNRVPVALKVFLLALAIIDDLGVIVIIALFYSSDLSTISLAIASVAILGLVGLNRKGITALTPYGILGLILWVAVLKSGVHATLAGVIIAFCIPLRAKDGSSPSEHLEHSLHPWSNFLILPVFAFANAGVALGNMSLDTLLSPVPIGIALGLILGKPIGVMLFSFIAVKLKLARLPDNVGWMQIAPVAAMCGIGFTMSMFIASLAFEQADPMYGDLARLGTLIGSFIAALVGYFWLSKVLPKKGV.

11 helical membrane-spanning segments follow: residues alanine 14–leucine 34, leucine 59–valine 79, serine 95–phenylalanine 115, alanine 124–leucine 144, valine 154–phenylalanine 174, serine 177–leucine 197, leucine 213–isoleucine 233, phenylalanine 261–leucine 281, isoleucine 290–isoleucine 310, isoleucine 328–leucine 348, and leucine 363–valine 383.

Belongs to the NhaA Na(+)/H(+) (TC 2.A.33) antiporter family.

It localises to the cell inner membrane. It catalyses the reaction Na(+)(in) + 2 H(+)(out) = Na(+)(out) + 2 H(+)(in). In terms of biological role, na(+)/H(+) antiporter that extrudes sodium in exchange for external protons. This chain is Na(+)/H(+) antiporter NhaA, found in Shewanella sp. (strain W3-18-1).